Consider the following 515-residue polypeptide: MNDHDEETLASLQQANDQLMAKNHALVKALSRATQEMTKTKAQLNQLAGPPMTFATMVRVHSAKTDGQGVQHASAEVAAGARRMIVPIAANLQASRLEPGRTVLLNENMVVVSQLDTDTLGAVRSVRQVCDDGRLLVADGGGNVTLVRCSGTLAKQAISAGDRVNVDASLRFALSLVPPENDDDLVLEEVPDVTFADIGGLDEQIERIRDAVQMPFQHRELFERYDLKPPKGVLLYGPPGNGKTLIAKAVANALAEGTDAGSGVFLSVKGPELLNKFVGESERLIRMIFKRARERAADGKPVIVFIDEMDSLLRTRGTGVSSDVETTIVPQFLTELDGVESLDNVMVIGASNRIDMIDPAVLRPGRLDVKIRVDRPGIQQATQIVRHYLTDKLPLSPNVDAKALIGVLVNDIYAQDEHRHLCDICDDHGQWRPVYLADVVSGAVLKNIVDRAKTYAVKLSITTGQAAAIGINLLAKAVDEEYGETRDALLDADPEQWSRINGLEPGRVTGIRPVA.

A coiled-coil region spans residues 2 to 49; sequence NDHDEETLASLQQANDQLMAKNHALVKALSRATQEMTKTKAQLNQLAG. 240–245 contributes to the ATP binding site; sequence GNGKTL.

This sequence belongs to the AAA ATPase family. As to quaternary structure, homohexamer. Assembles into a hexameric ring structure.

The protein is AAA ATPase forming ring-shaped complexes of Bifidobacterium adolescentis (strain ATCC 15703 / DSM 20083 / NCTC 11814 / E194a).